A 518-amino-acid chain; its full sequence is Putative N-acetylmuramoyl-L-alanine amidase YrvJ (518 aa).

The first 27 residues, 1 to 27, serve as a signal peptide directing secretion; that stretch reads MNKKYFVLIVCIIFTSALFPTFSSVTA. SH3b domains lie at 29–91, 102–164, 181–243, and 258–320; these read QGEA…ITKE, SDTV…TSGG, STTG…LTSS, and AKKA…VQTS. Disordered regions lie at residues 94-121 and 160-186; these read ASTS…PGTS and VTSG…TGTV. Composition is skewed to low complexity over residues 95–108 and 160–169; these read STSS…VTST and VTSGGSSSAS. The tract at residues 322–352 is disordered; that stretch reads SAEEAGEPPVSDSPSGNGSLNNKTIIVDPGH. The span at 333–345 shows a compositional bias: polar residues; that stretch reads DSPSGNGSLNNKT. Positions 346–514 constitute a MurNAc-LAA domain; that stretch reads IIVDPGHGGK…VTDGIESGLE (169 aa).

The protein belongs to the N-acetylmuramoyl-L-alanine amidase 3 family.

It is found in the secreted. The protein resides in the cell wall. The enzyme catalyses Hydrolyzes the link between N-acetylmuramoyl residues and L-amino acid residues in certain cell-wall glycopeptides.. Probably involved in cell-wall metabolism. This is Putative N-acetylmuramoyl-L-alanine amidase YrvJ (yrvJ) from Bacillus subtilis (strain 168).